A 483-amino-acid chain; its full sequence is MSRGQSYLISFFRNRTRKNPNTQIRSLTVESRDCESKPDEQKSAVSYTEMAKTVSTIMRERQRWQQTLVSDFPSFDFADPLFFGELLKSQNNVLFSLWFFRWLCSNYDYTPGPVSLNILFGALLDGKAVKAAKSFLDTTGFKPEPTLLEQYVKCLSEEGLVEEAIEVYNVLKDMGISSSVVTCNSVLLGCLKARKLDRFWELHKEMVESEFDSERIRCLIRALCDGGDVSEGYELLKQGLKQGLDPGQYVYAKLISGFCEIGNYACMSEVLHTMIAWNHFPSMYIYQKIIKGLCMNKKQLEAYCIFKNLKDKGYAPDRVVYTTMIRGFCEKGWLGSARKLWFEMIKKGMRPNEFAYNVMIHGHFKRGEISLVEAFYNEMLRNGYGGTMLSCNTMIKGFCSHGKSDEAFEIFKNMSETGVTPNAITYNALIKGFCKENKVEKGLKLYKELKALGLKPSGMAYAALVRNLKMSDSVATSLNLEIV.

PPR repeat units follow at residues 144-178, 179-213, 218-246, 247-281, 282-316, 317-351, 352-386, 387-421, and 422-456; these read EPTL…GISS, SVVT…EFDS, CLIR…GLDP, GQYV…NHFP, SMYI…GYAP, DRVV…GMRP, NEFA…GYGG, TMLS…GVTP, and NAIT…GLKP.

It belongs to the PPR family. P subfamily.

This is Pentatricopeptide repeat-containing protein At5g18950 from Arabidopsis thaliana (Mouse-ear cress).